The primary structure comprises 58 residues: Large ribosomal subunit protein uL30 (58 aa).

The protein belongs to the universal ribosomal protein uL30 family. In terms of assembly, part of the 50S ribosomal subunit.

This Psychromonas ingrahamii (strain DSM 17664 / CCUG 51855 / 37) protein is Large ribosomal subunit protein uL30.